The chain runs to 316 residues: Low affinity immunoglobulin gamma Fc region receptor II-a (316 aa).

The N-terminal stretch at 1–35 (MAMETQMSQNVCPRNLWLLQPLTVLLLLASADSQA) is a signal peptide. Topologically, residues 36-216 (APPKAVLKLE…PSVGSSSPVG (181 aa)) are extracellular. Ig-like C2-type domains are found at residues 38 to 117 (PKAV…VHLT) and 121 to 203 (EWLV…VTIT). 2 disulfides stabilise this stretch: cysteine 61/cysteine 103 and cysteine 142/cysteine 186. N-linked (GlcNAc...) asparagine glycans are attached at residues asparagine 96, asparagine 170, and asparagine 177. Residues 217 to 239 (IIVAVVIATAVAAIVAAVVALIY) form a helical membrane-spanning segment. At 240-316 (CRKKRISANS…PPNDHVNSNN (77 aa)) the chain is on the cytoplasmic side. 2 positions are modified to phosphotyrosine; by SRC-type Tyr-kinases: tyrosine 287 and tyrosine 303.

As to quaternary structure, interacts with INPP5D/SHIP1 and INPPL1/SHIP2, regulating its function. Interacts with APCS and FGR. Interacts with HCK. In terms of processing, phosphorylated by SRC-type Tyr-kinases such as HCK, LYN, BLK, FYN and SYK.

It is found in the cell membrane. Functionally, binds to the Fc region of immunoglobulins gamma. Low affinity receptor. By binding to IgG it initiates cellular responses against pathogens and soluble antigens. Promotes phagocytosis of opsonized antigens. This is Low affinity immunoglobulin gamma Fc region receptor II-a (FCGR2A) from Pan troglodytes (Chimpanzee).